The following is a 2138-amino-acid chain: Conidial yellow pigment biosynthesis polyketide synthase melA (2138 aa).

Residues 8 to 244 (YLFGDQTADF…TRVPIHGPYH (237 aa)) form an N-terminal acylcarrier protein transacylase domain (SAT) region. The Ketosynthase family 3 (KS3) domain occupies 373–804 (QSKIAIIGLS…GGNTALMVED (432 aa)). Residues Cys-545, His-680, and His-722 each act as for beta-ketoacyl synthase activity in the active site. Positions 910 to 1229 (FVFTGQGAQY…VSALYMAGIE (320 aa)) are malonyl-CoA:ACP transacylase (MAT) domain. Ser-999 serves as the catalytic For acyl/malonyl transferase activity. Residues 1288–1601 (SSAAQRVLET…RKILDMALPP (314 aa)) are product template (PT) domain. The N-terminal hotdog fold stretch occupies residues 1292–1423 (QRVLETSGDN…CNIKFFDPSP (132 aa)). The PKS/mFAS DH domain maps to 1292 to 1596 (QRVLETSGDN…FQGLARKILD (305 aa)). His-1324 (proton acceptor; for dehydratase activity) is an active-site residue. The segment at 1451-1596 (AHRMKRGMVY…FQGLARKILD (146 aa)) is C-terminal hotdog fold. Asp-1509 functions as the Proton donor; for dehydratase activity in the catalytic mechanism. One can recognise a Carrier 1 domain in the interval 1640–1714 (PSMATRALAI…DFKHLLAQMG (75 aa)). Ser-1674 carries the O-(pantetheine 4'-phosphoryl)serine modification. Positions 1712–1758 (QMGPGESSDGSSSEGDMSSAASSTDLSSPNTSGLPTPANEKSMTHGL) are disordered. Residues 1713 to 1739 (MGPGESSDGSSSEGDMSSAASSTDLSS) show a composition bias toward low complexity. Polar residues predominate over residues 1740 to 1758 (PNTSGLPTPANEKSMTHGL). Residues 1759–1836 (QGQNDSMRQI…DIETTLDLKP (78 aa)) enclose the Carrier 2 domain. Residue Ser-1796 is modified to O-(pantetheine 4'-phosphoryl)serine. The tract at residues 1863–2135 (TQHPPATSIL…ELARFIANSM (273 aa)) is claisen cyclase domain. Residue Ser-1953 is the For Claisen cyclase activity of the active site.

It carries out the reaction 6 malonyl-CoA + acetyl-CoA + 6 H(+) = naphtopyrone YWA1 + 6 CO2 + 7 CoA + H2O. It participates in pigment biosynthesis. The protein operates within polyketide biosynthesis; heptaketide naphthopyrone YWA1 biosynthesis. Functionally, non-reducing polyketide synthase involved in the biosynthesis of a yellow conidial pigment. Probably forms the heptaketide naphthopyrene YWA1 via condensation of acetate units. The chain is Conidial yellow pigment biosynthesis polyketide synthase melA from Penicillium expansum (Blue mold rot fungus).